The following is a 428-amino-acid chain: Serine--tRNA ligase (428 aa).

Residue 231–233 (TAE) participates in L-serine binding. 262 to 264 (RSE) contributes to the ATP binding site. Position 285 (Glu285) interacts with L-serine. Residue 349–352 (EISS) coordinates ATP. Ser385 lines the L-serine pocket.

This sequence belongs to the class-II aminoacyl-tRNA synthetase family. Type-1 seryl-tRNA synthetase subfamily. In terms of assembly, homodimer. The tRNA molecule binds across the dimer.

It is found in the cytoplasm. It carries out the reaction tRNA(Ser) + L-serine + ATP = L-seryl-tRNA(Ser) + AMP + diphosphate + H(+). The catalysed reaction is tRNA(Sec) + L-serine + ATP = L-seryl-tRNA(Sec) + AMP + diphosphate + H(+). The protein operates within aminoacyl-tRNA biosynthesis; selenocysteinyl-tRNA(Sec) biosynthesis; L-seryl-tRNA(Sec) from L-serine and tRNA(Sec): step 1/1. Catalyzes the attachment of serine to tRNA(Ser). Is also able to aminoacylate tRNA(Sec) with serine, to form the misacylated tRNA L-seryl-tRNA(Sec), which will be further converted into selenocysteinyl-tRNA(Sec). The sequence is that of Serine--tRNA ligase from Staphylococcus aureus (strain USA300).